The primary structure comprises 562 residues: Formate--tetrahydrofolate ligase (562 aa).

Thr-71 to Ser-78 lines the ATP pocket.

It belongs to the formate--tetrahydrofolate ligase family.

It carries out the reaction (6S)-5,6,7,8-tetrahydrofolate + formate + ATP = (6R)-10-formyltetrahydrofolate + ADP + phosphate. The protein operates within one-carbon metabolism; tetrahydrofolate interconversion. The protein is Formate--tetrahydrofolate ligase of Bacillus cereus (strain ATCC 10987 / NRS 248).